We begin with the raw amino-acid sequence, 506 residues long: UDP-glycosyltransferase eriJ (506 aa).

It belongs to the UDP-glycosyltransferase family.

The enzyme catalyses 11-O-acetylcyathatriol + UDP-alpha-D-xylose = erinacine Q + UDP + H(+). It carries out the reaction 11-O-acetylcyathatriol + UDP-alpha-D-glucose = erinacine Q2 + UDP + H(+). It participates in secondary metabolite biosynthesis. Its function is as follows. UDP-glycosyltransferase; part of the gene cluster that mediates the biosynthesis of erinacines, cyathane-xylosides that show unique biological activities, including leishmanicidal activity, stimulating activity for nerve growth-factor synthesis, and agonistic activity toward the kappa opioid receptor. Within the pathway, eriJ tranfers xylose from UDP-xylose onto C-14 of 11-O-acetyl-cyathatriol to form eracine Q, and, at a lower rate, glucose from UDP-D-glucose to produce eracine Q2. The first step of the erinacines biosynthesis pathway is catalyzed by the geranylgeranyl diphosphate (GGPP) synthase eriE via conversion of farnesyl pyrophosphate and isopentyl pyrophosphate into geranylgeranyl pyrophosphate (GGPP). GGPP is then substrate of the diterpene cyclase eriG for the production of cyatha-3,12-diene. The cytochrome P450 monooxygenase eriI then hydroxylates cyatha-3,12-diene at C-14 of the seven-membered ring to produce erinacol, which is further hydroxylated at C-15 by the cytochrome P450 monooxygenase eriC to yield cyathadiol. The cytochrome P450 monooxygenase eriA then catalyzes C-11 hydroxylation in the presence of the short chain dehydrogenase/reductase (SDR) eriH, which leads to the production of cyathatriol. The acetyltransferase eriL converts cyathatriol into 11-O-acetyl-cyathatriol. The SDR eriH catalyzes further oxidation of 11-O-acetyl-cyathatriol into 1-O-acetylcyathin A3. Finally, the glycosyl transferase eriJ tranfers xylose from UDP-xylose onto C-14 of 11-O-acetyl-cyathatriol to form eracine Q. EriJ is also able to convert 11-O-acetyl-cyathatriol to eracine Q2 by using UDP-D-glucose as cosubstrate, but at a lower rate. This chain is UDP-glycosyltransferase eriJ, found in Hericium erinaceus (Lion's mane mushroom).